The following is a 566-amino-acid chain: Sorting nexin lst-4 (566 aa).

The 61-residue stretch at 1 to 61 (MAQVKAEYDF…PESYVTPYQA (61 aa)) folds into the SH3 domain. The segment at 59 to 179 (YQASRPPPVL…DRGSNKVNKN (121 aa)) is disordered. The segment covering 63–77 (RPPPVLPPPLPPTSS) has biased composition (pro residues). The span at 127-140 (DDFDDEWTDEDDEQ) shows a compositional bias: acidic residues. Over residues 143–154 (TRPNVQSSIGSN) the composition is skewed to polar residues. Residues 155-173 (SRRDLSRSHSEHGGPDRGS) are compositionally biased toward basic and acidic residues. The PX domain occupies 227–339 (YTCIVDKPKK…HFISCTDEKD (113 aa)). The BAR domain maps to 362–566 (TVPHQPLDPN…KLTSLAARYD (205 aa)).

The protein belongs to the sorting nexin family. In terms of assembly, homodimer. Isoform d interacts (via SH3 domain) with dyn-1. Expressed in vulval precursor cells (VPCs) and apoptotic germ cells. Colocalizes with actin, dyn-1 and rab-5 in early phagosomes.

The protein localises to the cytoplasm. The protein resides in the cytoplasmic vesicle. It is found in the phagosome membrane. Functionally, involved in the signaling of vulval development by acting as a negative regulator of epidermal growth factor receptor (EGFR) signaling. Aids in phagosomal membrane tubule formation which is required for phagosomal fusion with endosomes and lysosomes. Also recruits rab-7 to phagosomes by an interaction with dyn-1. These are events leading to phagosome maturation which is a step in apoptotic cell corpse clearance. Binds phosphatidylinositol-3,4,5-trisphosphate. The polypeptide is Sorting nexin lst-4 (Caenorhabditis elegans).